Consider the following 513-residue polypeptide: ATP synthase subunit alpha (513 aa).

Residue 169-176 (GDRQTGKT) participates in ATP binding.

The protein belongs to the ATPase alpha/beta chains family. F-type ATPases have 2 components, CF(1) - the catalytic core - and CF(0) - the membrane proton channel. CF(1) has five subunits: alpha(3), beta(3), gamma(1), delta(1), epsilon(1). CF(0) has three main subunits: a(1), b(2) and c(9-12). The alpha and beta chains form an alternating ring which encloses part of the gamma chain. CF(1) is attached to CF(0) by a central stalk formed by the gamma and epsilon chains, while a peripheral stalk is formed by the delta and b chains.

The protein localises to the cell inner membrane. It catalyses the reaction ATP + H2O + 4 H(+)(in) = ADP + phosphate + 5 H(+)(out). In terms of biological role, produces ATP from ADP in the presence of a proton gradient across the membrane. The alpha chain is a regulatory subunit. In Proteus mirabilis (strain HI4320), this protein is ATP synthase subunit alpha.